We begin with the raw amino-acid sequence, 146 residues long: Hemoglobin subunit beta (146 aa).

Residues 2–146 (FLTAEEKSLV…VANALAHKYH (145 aa)) enclose the Globin domain. Ser-44 carries the post-translational modification Phosphoserine. The residue at position 59 (Lys-59) is an N6-acetyllysine. His-63 serves as a coordination point for heme b. N6-acetyllysine is present on Lys-82. His-92 provides a ligand contact to heme b. Position 93 is an S-nitrosocysteine (Cys-93). N6-acetyllysine is present on Lys-144.

The protein belongs to the globin family. Heterotetramer of two alpha chains and two beta chains. Red blood cells.

Functionally, involved in oxygen transport from the lung to the various peripheral tissues. This chain is Hemoglobin subunit beta (HBB), found in Proteles cristata (Aardwolf).